The chain runs to 127 residues: Glycine cleavage system H protein (127 aa).

The Lipoyl-binding domain maps to 24 to 106 (TATLGISAFA…YGEGWLVKVQ (83 aa)). Residue Lys65 is modified to N6-lipoyllysine.

It belongs to the GcvH family. As to quaternary structure, the glycine cleavage system is composed of four proteins: P, T, L and H. (R)-lipoate is required as a cofactor.

Its function is as follows. The glycine cleavage system catalyzes the degradation of glycine. The H protein shuttles the methylamine group of glycine from the P protein to the T protein. This Thermosynechococcus vestitus (strain NIES-2133 / IAM M-273 / BP-1) protein is Glycine cleavage system H protein.